Here is a 317-residue protein sequence, read N- to C-terminus: Cytochrome f (317 aa).

Residues 1–34 (MKGLKNQIMKKTSLFICTLLFILSIVFYPKITFA) form the signal peptide. 4 residues coordinate heme: Y35, C55, C58, and H59. Residues 284–304 (VIGLIAFFIGVGLTQILLVLK) traverse the membrane as a helical segment.

This sequence belongs to the cytochrome f family. In terms of assembly, the 4 large subunits of the cytochrome b6-f complex are cytochrome b6, subunit IV (17 kDa polypeptide, PetD), cytochrome f and the Rieske protein, while the 4 small subunits are PetG, PetL, PetM and PetN. The complex functions as a dimer. Heme is required as a cofactor.

Its subcellular location is the cellular thylakoid membrane. In terms of biological role, component of the cytochrome b6-f complex, which mediates electron transfer between photosystem II (PSII) and photosystem I (PSI), cyclic electron flow around PSI, and state transitions. In Prochlorococcus marinus (strain MIT 9215), this protein is Cytochrome f.